The sequence spans 200 residues: COMM domain-containing protein 7 (200 aa).

In terms of domain architecture, COMM spans 133 to 200 (QLVDMEWKFG…RVRTSMECFS (68 aa)).

This sequence belongs to the COMM domain-containing protein 7 family. As to quaternary structure, component of the commander complex consisting of the CCC subcomplex and the retriever subcomplex. Component of the CCC (COMMD/CCDC22/CCDC93) subcomplex consisting of COMMD1, COMMD2, COMMD3, COMMD4, COMMD5, COMMD6, COMMD7, COMMD8, COMMD9, COMMD10, CCDC22 and CCDC93; within the complex forms a heterodimer with COMMD9. Interacts with RELA. Interacts with CCDC22, CCDC93, SCNN1B, CUL7.

The protein resides in the cytoplasmic vesicle. Its function is as follows. Scaffold protein in the commander complex that is essential for endosomal recycling of transmembrane cargos; the commander complex is composed of the CCC subcomplex and the retriever subcomplex. May modulate activity of cullin-RING E3 ubiquitin ligase (CRL) complexes. Associates with the NF-kappa-B complex and suppresses its transcriptional activity. The protein is COMM domain-containing protein 7 (COMMD7) of Bos taurus (Bovine).